A 497-amino-acid polypeptide reads, in one-letter code: Glycerol kinase (497 aa).

Threonine 11 contributes to the ADP binding site. Positions 11, 12, and 13 each coordinate ATP. Threonine 11 contributes to the sn-glycerol 3-phosphate binding site. Residue arginine 15 coordinates ADP. Arginine 81, glutamate 82, tyrosine 133, and aspartate 242 together coordinate sn-glycerol 3-phosphate. 5 residues coordinate glycerol: arginine 81, glutamate 82, tyrosine 133, aspartate 242, and glutamine 243. Positions 264 and 307 each coordinate ADP. Residues threonine 264, glycine 307, glutamine 311, and glycine 412 each contribute to the ATP site. The ADP site is built by glycine 412 and asparagine 416.

Belongs to the FGGY kinase family.

The catalysed reaction is glycerol + ATP = sn-glycerol 3-phosphate + ADP + H(+). It participates in polyol metabolism; glycerol degradation via glycerol kinase pathway; sn-glycerol 3-phosphate from glycerol: step 1/1. With respect to regulation, inhibited by fructose 1,6-bisphosphate (FBP). Key enzyme in the regulation of glycerol uptake and metabolism. Catalyzes the phosphorylation of glycerol to yield sn-glycerol 3-phosphate. The polypeptide is Glycerol kinase (Leptothrix cholodnii (strain ATCC 51168 / LMG 8142 / SP-6) (Leptothrix discophora (strain SP-6))).